The primary structure comprises 316 residues: tRNA dimethylallyltransferase (316 aa).

An ATP-binding site is contributed by 17-24; the sequence is GPTASGKT. Position 19-24 (19-24) interacts with substrate; that stretch reads TASGKT. Interaction with substrate tRNA regions lie at residues 42-45, 166-170, and 247-252; these read DSAL, QRLSR, and RCVGYR.

This sequence belongs to the IPP transferase family. Monomer. Requires Mg(2+) as cofactor.

It catalyses the reaction adenosine(37) in tRNA + dimethylallyl diphosphate = N(6)-dimethylallyladenosine(37) in tRNA + diphosphate. Its function is as follows. Catalyzes the transfer of a dimethylallyl group onto the adenine at position 37 in tRNAs that read codons beginning with uridine, leading to the formation of N6-(dimethylallyl)adenosine (i(6)A). In Salmonella enteritidis PT4 (strain P125109), this protein is tRNA dimethylallyltransferase.